Consider the following 341-residue polypeptide: L-threonine 3-dehydrogenase (341 aa).

C38 lines the Zn(2+) pocket. Residues T40 and H43 each act as charge relay system in the active site. Zn(2+)-binding residues include H63, E64, C93, C96, C99, and C107. Residues I175, D195, R200, 262–264 (LGI), and 286–287 (IY) each bind NAD(+).

This sequence belongs to the zinc-containing alcohol dehydrogenase family. Homotetramer. The cofactor is Zn(2+).

It localises to the cytoplasm. It catalyses the reaction L-threonine + NAD(+) = (2S)-2-amino-3-oxobutanoate + NADH + H(+). It functions in the pathway amino-acid degradation; L-threonine degradation via oxydo-reductase pathway; glycine from L-threonine: step 1/2. Its function is as follows. Catalyzes the NAD(+)-dependent oxidation of L-threonine to 2-amino-3-ketobutyrate. This chain is L-threonine 3-dehydrogenase, found in Proteus mirabilis (strain HI4320).